The chain runs to 330 residues: Putative quinone oxidoreductase YhfP (330 aa).

NADP(+) is bound by residues Tyr45, 160–163, 182–184, Arg202, Leu248, Ile262, Ser273, and Asn320; these read TGGV and TGN.

The protein belongs to the zinc-containing alcohol dehydrogenase family. Quinone oxidoreductase subfamily. As to quaternary structure, homodimer, or homotetramer.

The protein resides in the cytoplasm. In Bacillus subtilis (strain 168), this protein is Putative quinone oxidoreductase YhfP (yhfP).